Consider the following 457-residue polypeptide: Squalene epoxidase erg1 (457 aa).

FAD contacts are provided by residues 15 to 16 (IT), 35 to 36 (ER), Arg43, Arg114, Val130, Asp293, and Met306. Transmembrane regions (helical) follow at residues 347-364 (GYSF…KLFT), 409-429 (FYAV…ALLM), and 433-453 (IIES…YILS).

This sequence belongs to the squalene monooxygenase family. FAD is required as a cofactor.

The protein resides in the microsome membrane. The protein localises to the endoplasmic reticulum membrane. It localises to the vacuole membrane. It catalyses the reaction squalene + reduced [NADPH--hemoprotein reductase] + O2 = (S)-2,3-epoxysqualene + oxidized [NADPH--hemoprotein reductase] + H2O + H(+). It participates in terpene metabolism; lanosterol biosynthesis; lanosterol from farnesyl diphosphate: step 2/3. The protein operates within steroid metabolism; ergosterol biosynthesis. With respect to regulation, activity is blocked by the allylamine class antifungal terbinafine. Squalene epoxidase; part of the third module of ergosterol biosynthesis pathway that includes by the late steps of the pathway. Erg1 catalyzes the epoxidation of squalene into 2,3-epoxysqualene. The third module or late pathway involves the ergosterol synthesis itself through consecutive reactions that mainly occur in the endoplasmic reticulum (ER) membrane. Firstly, the squalene synthase erg9 catalyzes the condensation of 2 farnesyl pyrophosphate moieties to form squalene, which is the precursor of all steroids. Secondly, squalene is converted into lanosterol by the consecutive action of the squalene epoxidase erg1 and the lanosterol synthase erg7. The lanosterol 14-alpha-demethylase erg11/cyp1 catalyzes C14-demethylation of lanosterol to produce 4,4'-dimethyl cholesta-8,14,24-triene-3-beta-ol. In the next steps, a complex process involving various demethylation, reduction and desaturation reactions catalyzed by the C-14 reductase erg24 and the C-4 demethylation complex erg25-erg26-erg27 leads to the production of zymosterol. Erg28 likely functions in the C-4 demethylation complex reaction by tethering erg26 and Erg27 to the endoplasmic reticulum or to facilitate interaction between these proteins. Then, the sterol 24-C-methyltransferase erg6 catalyzes the methyl transfer from S-adenosyl-methionine to the C-24 of zymosterol to form fecosterol. The C-8 sterol isomerase erg2 catalyzes the reaction which results in unsaturation at C-7 in the B ring of sterols and thus converts fecosterol to episterol. The sterol-C5-desaturases erg31 and erg32 then catalyze the introduction of a C-5 double bond in the B ring to produce 5-dehydroepisterol. The C-22 sterol desaturase erg5 further converts 5-dehydroepisterol into ergosta-5,7,22,24(28)-tetraen-3beta-ol by forming the C-22(23) double bond in the sterol side chain. Finally, ergosta-5,7,22,24(28)-tetraen-3beta-ol is substrate of the C-24(28) sterol reductase erg4 to produce ergosterol. In the genus Schizosaccharomyces, a second route exists between lanosterol and fecosterol, via the methylation of lanosterol to eburicol by erg6, followed by C14-demethylation by erg11/cyp1 and C4-demethylation by the demethylation complex erg25-erg26-erg27. The sequence is that of Squalene epoxidase erg1 from Schizosaccharomyces pombe (strain 972 / ATCC 24843) (Fission yeast).